We begin with the raw amino-acid sequence, 139 residues long: Transcription antitermination protein NusB (139 aa).

The protein belongs to the NusB family.

Functionally, involved in transcription antitermination. Required for transcription of ribosomal RNA (rRNA) genes. Binds specifically to the boxA antiterminator sequence of the ribosomal RNA (rrn) operons. The protein is Transcription antitermination protein NusB of Baumannia cicadellinicola subsp. Homalodisca coagulata.